We begin with the raw amino-acid sequence, 275 residues long: Methyltransferase str2 (275 aa).

The protein belongs to the methyltransferase superfamily. LaeA methyltransferase family.

Its pathway is mycotoxin biosynthesis. Methyltransferase; part of the gene cluster that mediates the biosynthesis of strobilurin A, an antifungal polyketide that contains a key beta-methoxyacrylate toxophore that targets the complex III of the mitochondrial electron transport chain. Strobilurin biosynthesis begins with construction of benzoyl CoA by step-wise elimination of ammonia from phenylalanine by the phenylalanine ammonia-lyase str11, oxygenation by str8 and retro-Claisen reaction to form benzoic acid, which is activated to its CoA thiolester benzoyl CoA by the dedicated CoA ligase str10. Benzoyl CoA forms the starter unit for the highly reducing polyketide synthase stpks1 that produces the polyketide prestrobilutin A. The FAD-dependent oxygenase str9 then catalyzes the key oxidative rearrangement responsible for the creation of the beta-methoxyacrylate toxophore. Str9 performs epoxidation of the 2,3 olefin of prestrobilutin A, followed by Meinwald rearrangement to furnish the aldehyde intermediate. Rapid enolization of the aldehyde intermediate would give the beta-methoxyacrylate skeleton and methylations catalyzed by str2 and str3 complete the synthesis and lead to the production of strobilurin A. The short-chain dehydrogenase stl2 and the dehydrogenase str4 play a role in the shunt pathway leading to the production of bolineol. The cluster encodes no obvious halogenase gene that could be involved in production of strobilurin B, nor any obvious dimethylallyl-transferase that could be involved in the production of strobilurin G. It is possible that unknown proteins encoded in, or near, the cluster (such as str1 or stl1) may form new classes of halogenases or dimethylally-transferases, or that the responsible genes are located elsewhere on the genome. Similarly, proteins encoded by str5/str6 hydrolases appear to have no chemical role in the biosynthesis of strobilurin A. Finally, no obvious self-resistance gene is found within the cluster. This Strobilurus tenacellus protein is Methyltransferase str2.